The following is a 1413-amino-acid chain: ABC transporter G family member 33 (1413 aa).

Residues 1 to 10 (MGSSFRSSSS) are compositionally biased toward low complexity. The segment at 1 to 21 (MGSSFRSSSSRNEHEDGGDEA) is disordered. Positions 11 to 21 (RNEHEDGGDEA) are enriched in basic and acidic residues. One can recognise an ABC transporter 1 domain in the interval 140 to 412 (LKLSGVRTNE…FEECGFQCPE (273 aa)). 172-179 (GPPGCGKT) contributes to the ATP binding site. An ABC transmembrane type-2 1 domain is found at 490-702 (ELFRACISRE…AEIGLSVNEF (213 aa)). A run of 6 helical transmembrane segments spans residues 509–529 (VYLF…TVFI), 546–566 (CLFF…SMTV), 580–600 (FYPA…LSFF), 626–646 (FMIL…IAAI), 652–672 (AAMT…GFAI), and 738–758 (LSAL…ALSF). The 253-residue stretch at 813–1065 (ITFQDLNYYV…CVIEYFQNIP (253 aa)) folds into the ABC transporter 2 domain. 858-865 (GISGAGKT) provides a ligand contact to ATP. The 215-residue stretch at 1138 to 1352 (EQFKSCLWKM…TLNLFFSSQY (215 aa)) folds into the ABC transmembrane type-2 2 domain. 7 helical membrane-spanning segments follow: residues 1157-1177 (YNLM…LLFW), 1189-1209 (LFTV…NNCT), 1245-1265 (IPYI…MIGF), 1276-1296 (LYAM…LISI), 1302-1322 (VAAI…GFLI), 1330-1350 (WWVW…FFSS), and 1385-1405 (ITAI…AFFV).

The protein belongs to the ABC transporter superfamily. ABCG family. PDR (TC 3.A.1.205) subfamily. As to expression, expressed in roots and stems.

The protein resides in the membrane. Its function is as follows. May be a general defense protein. This Arabidopsis thaliana (Mouse-ear cress) protein is ABC transporter G family member 33 (ABCG33).